The chain runs to 123 residues: Large ribosomal subunit protein uL22c (123 aa).

Belongs to the universal ribosomal protein uL22 family. Part of the 50S ribosomal subunit.

The protein localises to the plastid. It is found in the chloroplast. Functionally, this protein binds specifically to 23S rRNA. In terms of biological role, the globular domain of the protein is located near the polypeptide exit tunnel on the outside of the subunit, while an extended beta-hairpin is found that lines the wall of the exit tunnel in the center of the 70S ribosome. This chain is Large ribosomal subunit protein uL22c (rpl22), found in Illicium oligandrum (Star anise).